The chain runs to 193 residues: Gas vesicle protein C (193 aa).

Repeats lie at residues 19–51 (VAEL…LQAF), 52–84 (YKDL…LLAF), 85–117 (HKEL…LLAF), 118–150 (YQEV…LLAF), and 151–183 (HKEL…LLKF). The segment at 19 to 183 (VAELSLETRE…KEQKESLLKF (165 aa)) is 5 X 33 AA tandem repeats.

It belongs to the gas vesicle GvpC family.

The protein localises to the gas vesicle. Its function is as follows. Confers stability, involved in shaping gas vesicles (GV), hollow, gas-filled proteinaceous nanostructures. During planktonic growth they allow positioning of the organism at a favorable depth for light or nutrient acquisition. The ratio of GvpA:GvpC is estimated to be 25:1. GvpC strengthens the GV wall, probably by connecting several GvpA proteins in the same and/or adjacent ribs. Removal of GvpC by SDS reduces the critical collapse pressure (CCP) of stored gas vesicles from 0.23 Mpa to 0.08 MPa. Removal of GvpC by urea reduces CCP of freshly isolated GVs from 0.550 MPa to 0.190 MPa; addition of recombinant GvpC restores CCP to 0.508 MPa. As the turgor pressure in this species is usually 0.35 MPa (plus the water column pressure in its growth environment), this protein is essential for GV formation. This is Gas vesicle protein C from Dolichospermum flosaquae (Anabaena flos-aquae).